Reading from the N-terminus, the 524-residue chain is Putative cysteine ligase BshC (524 aa).

Residues 437–457 (AQALDRSARKINYQIEKMERK) are a coiled coil.

The protein belongs to the BshC family.

The protein is Putative cysteine ligase BshC of Solibacter usitatus (strain Ellin6076).